A 100-amino-acid chain; its full sequence is Integration host factor subunit alpha (100 aa).

The disordered stretch occupies residues 53 to 72; that stretch reads FQLRDKPQRPGRNPKTGEEV.

Belongs to the bacterial histone-like protein family. In terms of assembly, heterodimer of an alpha and a beta chain.

Its function is as follows. This protein is one of the two subunits of integration host factor, a specific DNA-binding protein that functions in genetic recombination as well as in transcriptional and translational control. In Neisseria gonorrhoeae (strain ATCC 700825 / FA 1090), this protein is Integration host factor subunit alpha.